The sequence spans 173 residues: Methylated-DNA--protein-cysteine methyltransferase (173 aa).

Cys-143 acts as the Nucleophile; methyl group acceptor in catalysis.

This sequence belongs to the MGMT family.

The protein localises to the cytoplasm. The catalysed reaction is a 6-O-methyl-2'-deoxyguanosine in DNA + L-cysteinyl-[protein] = S-methyl-L-cysteinyl-[protein] + a 2'-deoxyguanosine in DNA. It carries out the reaction a 4-O-methyl-thymidine in DNA + L-cysteinyl-[protein] = a thymidine in DNA + S-methyl-L-cysteinyl-[protein]. Functionally, involved in the cellular defense against the biological effects of O6-methylguanine (O6-MeG) and O4-methylthymine (O4-MeT) in DNA. Repairs the methylated nucleobase in DNA by stoichiometrically transferring the methyl group to a cysteine residue in the enzyme. This is a suicide reaction: the enzyme is irreversibly inactivated. This Pyrococcus sp. (strain NA2) protein is Methylated-DNA--protein-cysteine methyltransferase.